A 245-amino-acid chain; its full sequence is 1-(5-phosphoribosyl)-5-[(5-phosphoribosylamino)methylideneamino] imidazole-4-carboxamide isomerase (245 aa).

The Proton acceptor role is filled by Asp8. The active-site Proton donor is the Asp129.

This sequence belongs to the HisA/HisF family.

It is found in the cytoplasm. The catalysed reaction is 1-(5-phospho-beta-D-ribosyl)-5-[(5-phospho-beta-D-ribosylamino)methylideneamino]imidazole-4-carboxamide = 5-[(5-phospho-1-deoxy-D-ribulos-1-ylimino)methylamino]-1-(5-phospho-beta-D-ribosyl)imidazole-4-carboxamide. It functions in the pathway amino-acid biosynthesis; L-histidine biosynthesis; L-histidine from 5-phospho-alpha-D-ribose 1-diphosphate: step 4/9. This Geotalea uraniireducens (strain Rf4) (Geobacter uraniireducens) protein is 1-(5-phosphoribosyl)-5-[(5-phosphoribosylamino)methylideneamino] imidazole-4-carboxamide isomerase.